Consider the following 397-residue polypeptide: 2-oxoglutarate and iron-dependent oxygenase domain-containing protein ICU11 (397 aa).

The disordered stretch occupies residues 1-56 (MCNQTPLRSMALDSSGKQPEQQQQQQPRASSGNGEARLKLRRTPNEEHEPENYEDL). Over residues 18-27 (QPEQQQQQQP) the composition is skewed to low complexity. Positions 238–339 (SLDSHHGYIV…RANLILWCRS (102 aa)) constitute a Fe2OG dioxygenase domain. Fe cation-binding residues include His-260, Asp-262, and His-320. Arg-330 serves as a coordination point for 2-oxoglutarate.

The cofactor is Fe(2+). L-ascorbate serves as cofactor. In terms of tissue distribution, expressed in roots, cotyledons, rosette leaves, cauline leaves and inflorescences.

Its subcellular location is the nucleus. The protein localises to the nucleoplasm. Functionally, participates in the epigenetic repression of flowering genes in association with CP2. Functions in the repression of several members of the MADS-box transcription factors family, including SEP3, during vegetative development via histone modification. The protein is 2-oxoglutarate and iron-dependent oxygenase domain-containing protein ICU11 of Arabidopsis thaliana (Mouse-ear cress).